The primary structure comprises 191 residues: Ion-translocating oxidoreductase complex subunit B (191 aa).

Residues 1-26 are hydrophobic; that stretch reads MSAIWIAIAVLSALSLVFGGLLGYAS. Positions 32–91 constitute a 4Fe-4S domain; it reads EEDPIVEQIDAILPQSQCGQCGYPGCRPYADAVGNNGEMINKCAPGGEQTMLKLAALLNV. Cysteine 49, cysteine 52, cysteine 57, cysteine 74, cysteine 116, cysteine 119, cysteine 122, cysteine 126, cysteine 146, cysteine 149, cysteine 152, and cysteine 156 together coordinate [4Fe-4S] cluster. 2 4Fe-4S ferredoxin-type domains span residues 107 to 136 and 137 to 166; these read KVAWIDEANCIGCTKCIQACPVDAIVGATR and AMHTVLSDICTGCDLCVAPCPTDCIEMRPV.

This sequence belongs to the 4Fe4S bacterial-type ferredoxin family. RnfB subfamily. The complex is composed of six subunits: RnfA, RnfB, RnfC, RnfD, RnfE and RnfG. [4Fe-4S] cluster serves as cofactor.

The protein resides in the cell inner membrane. In terms of biological role, part of a membrane-bound complex that couples electron transfer with translocation of ions across the membrane. This is Ion-translocating oxidoreductase complex subunit B from Erwinia tasmaniensis (strain DSM 17950 / CFBP 7177 / CIP 109463 / NCPPB 4357 / Et1/99).